A 349-amino-acid chain; its full sequence is Ferredoxin--NADP reductase 1 (349 aa).

FAD-binding residues include E36, K44, Y48, V88, L123, D290, and S331.

It belongs to the ferredoxin--NADP reductase type 2 family. As to quaternary structure, homodimer. The cofactor is FAD.

It catalyses the reaction 2 reduced [2Fe-2S]-[ferredoxin] + NADP(+) + H(+) = 2 oxidized [2Fe-2S]-[ferredoxin] + NADPH. The protein is Ferredoxin--NADP reductase 1 of Bacillus licheniformis (strain ATCC 14580 / DSM 13 / JCM 2505 / CCUG 7422 / NBRC 12200 / NCIMB 9375 / NCTC 10341 / NRRL NRS-1264 / Gibson 46).